Reading from the N-terminus, the 482-residue chain is Glutamyl-tRNA(Gln) amidotransferase subunit A (482 aa).

Catalysis depends on charge relay system residues K75 and S150. The Acyl-ester intermediate role is filled by S174.

Belongs to the amidase family. GatA subfamily. Heterotrimer of A, B and C subunits.

The enzyme catalyses L-glutamyl-tRNA(Gln) + L-glutamine + ATP + H2O = L-glutaminyl-tRNA(Gln) + L-glutamate + ADP + phosphate + H(+). Allows the formation of correctly charged Gln-tRNA(Gln) through the transamidation of misacylated Glu-tRNA(Gln) in organisms which lack glutaminyl-tRNA synthetase. The reaction takes place in the presence of glutamine and ATP through an activated gamma-phospho-Glu-tRNA(Gln). This chain is Glutamyl-tRNA(Gln) amidotransferase subunit A, found in Rippkaea orientalis (strain PCC 8801 / RF-1) (Cyanothece sp. (strain PCC 8801)).